The chain runs to 194 residues: MALVPMVIEQTSRGERSYDIYSRLLKERVIFLSGEVEDNMANLIVAQLLFLESEDPDKDINLYINSPGGSVTAGMAIYDTMQFIKPDVRTLCIGQACSMGAFLLAGGAAGKRAALPNARVMIHQPLGGFRGQASDIQIHAQEILKIKHTLNERLAFHSGQPLEQIEKDTDRDNFMSAEEAQNYGLIDSVLVKRS.

S98 (nucleophile) is an active-site residue. H123 is a catalytic residue.

It belongs to the peptidase S14 family. Fourteen ClpP subunits assemble into 2 heptameric rings which stack back to back to give a disk-like structure with a central cavity, resembling the structure of eukaryotic proteasomes.

It localises to the cytoplasm. The catalysed reaction is Hydrolysis of proteins to small peptides in the presence of ATP and magnesium. alpha-casein is the usual test substrate. In the absence of ATP, only oligopeptides shorter than five residues are hydrolyzed (such as succinyl-Leu-Tyr-|-NHMec, and Leu-Tyr-Leu-|-Tyr-Trp, in which cleavage of the -Tyr-|-Leu- and -Tyr-|-Trp bonds also occurs).. In terms of biological role, cleaves peptides in various proteins in a process that requires ATP hydrolysis. Has a chymotrypsin-like activity. Plays a major role in the degradation of misfolded proteins. The sequence is that of ATP-dependent Clp protease proteolytic subunit from Actinobacillus succinogenes (strain ATCC 55618 / DSM 22257 / CCUG 43843 / 130Z).